Reading from the N-terminus, the 170-residue chain is Mediator of RNA polymerase II transcription subunit 10 (170 aa).

It belongs to the Mediator complex subunit 10 family. In terms of assembly, component of the Mediator complex.

It is found in the nucleus. Component of the Mediator complex, a coactivator involved in the regulated transcription of nearly all RNA polymerase II-dependent genes. Mediator functions as a bridge to convey information from gene-specific regulatory proteins to the basal RNA polymerase II transcription machinery. Mediator is recruited to promoters by direct interactions with regulatory proteins and serves as a scaffold for the assembly of a functional preinitiation complex with RNA polymerase II and the general transcription factors. The protein is Mediator of RNA polymerase II transcription subunit 10 (NUT2) of Candida albicans (strain SC5314 / ATCC MYA-2876) (Yeast).